Reading from the N-terminus, the 477-residue chain is Bifunctional protein HldE (477 aa).

The tract at residues 1–318 (MKVTLPEFER…ENAVRGRADT (318 aa)) is ribokinase. Lys-179 is modified (N6-acetyllysine). 195–198 (NLSE) lines the ATP pocket. The active site involves Asp-264. The interval 344 to 477 (MTNGVFDILH…IKKIQQDKKG (134 aa)) is cytidylyltransferase.

It in the N-terminal section; belongs to the carbohydrate kinase PfkB family. The protein in the C-terminal section; belongs to the cytidylyltransferase family. In terms of assembly, homodimer.

It carries out the reaction D-glycero-beta-D-manno-heptose 7-phosphate + ATP = D-glycero-beta-D-manno-heptose 1,7-bisphosphate + ADP + H(+). It catalyses the reaction D-glycero-beta-D-manno-heptose 1-phosphate + ATP + H(+) = ADP-D-glycero-beta-D-manno-heptose + diphosphate. Its pathway is nucleotide-sugar biosynthesis; ADP-L-glycero-beta-D-manno-heptose biosynthesis; ADP-L-glycero-beta-D-manno-heptose from D-glycero-beta-D-manno-heptose 7-phosphate: step 1/4. The protein operates within nucleotide-sugar biosynthesis; ADP-L-glycero-beta-D-manno-heptose biosynthesis; ADP-L-glycero-beta-D-manno-heptose from D-glycero-beta-D-manno-heptose 7-phosphate: step 3/4. In terms of biological role, catalyzes the phosphorylation of D-glycero-D-manno-heptose 7-phosphate at the C-1 position to selectively form D-glycero-beta-D-manno-heptose-1,7-bisphosphate. Its function is as follows. Catalyzes the ADP transfer from ATP to D-glycero-beta-D-manno-heptose 1-phosphate, yielding ADP-D-glycero-beta-D-manno-heptose. The polypeptide is Bifunctional protein HldE (Shigella flexneri serotype 5b (strain 8401)).